Here is a 288-residue protein sequence, read N- to C-terminus: Probable proteasome subunit alpha type-7 (288 aa).

Threonine 2 bears the N-acetylthreonine mark. The disordered stretch occupies residues isoleucine 247 to glutamate 288. Residues glycine 249 to asparagine 268 are compositionally biased toward acidic residues. Low complexity predominate over residues alanine 269–threonine 279.

It belongs to the peptidase T1A family. As to quaternary structure, the 26S proteasome consists of a 20S proteasome core and two 19S regulatory subunits. The 20S proteasome core is composed of 28 subunits that are arranged in four stacked rings, resulting in a barrel-shaped structure. The two end rings are each formed by seven alpha subunits, and the two central rings are each formed by seven beta subunits. The catalytic chamber with the active sites is on the inside of the barrel. The alpha and beta forms are probably products of the same gene with different post-translational modifications.

It localises to the cytoplasm. Its subcellular location is the nucleus. Its function is as follows. The proteasome degrades poly-ubiquitinated proteins in the cytoplasm and in the nucleus. It is essential for the regulated turnover of proteins and for the removal of misfolded proteins. The proteasome is a multicatalytic proteinase complex that is characterized by its ability to cleave peptides with Arg, Phe, Tyr, Leu, and Glu adjacent to the leaving group at neutral or slightly basic pH. It has an ATP-dependent proteolytic activity. This Saccharomyces cerevisiae (strain ATCC 204508 / S288c) (Baker's yeast) protein is Probable proteasome subunit alpha type-7 (PRE10).